The chain runs to 300 residues: Fatty acid elongase 3 (300 aa).

3 helical membrane-spanning segments follow: residues 31-51, 61-81, and 127-147; these read VPAV…ENVM, FLNM…AYYC, and IFFD…KIPE. Residues 165-169 carry the HxxHH motif motif; that stretch reads HWYHH. His-168 serves as the catalytic Nucleophile. 4 helical membrane passes run 170–190, 192–212, 219–239, and 261–283; these read ATVM…GLWF, TMNY…ACGM, IAPL…LIVL, and MGLL…SYIS.

Belongs to the ELO family.

It is found in the endoplasmic reticulum membrane. The enzyme catalyses an acyl-CoA + malonyl-CoA + H(+) = a 3-oxoacyl-CoA + CO2 + CoA. Its pathway is lipid metabolism; fatty acid biosynthesis. Functionally, involved in the synthesis of fatty acids. Elongates C14 fatty acids to C18. Required for the maintenance of the global lipidome profile in this parasite. In Trypanosoma cruzi (strain CL Brener), this protein is Fatty acid elongase 3.